The following is a 109-amino-acid chain: Thioredoxin 1 (109 aa).

Residues 2-109 (SDKIIHLTDD…LKEFLDANLA (108 aa)) form the Thioredoxin domain. Catalysis depends on nucleophile residues cysteine 33 and cysteine 36. Residues cysteine 33 and cysteine 36 are joined by a disulfide bond. At lysine 70 the chain carries N6-acetyllysine.

Belongs to the thioredoxin family. As to quaternary structure, monomer.

Functionally, participates in various redox reactions through the reversible oxidation of its active center dithiol to a disulfide and catalyzes dithiol-disulfide exchange reactions. This chain is Thioredoxin 1 (trxA), found in Escherichia coli O157:H7.